The primary structure comprises 673 residues: ATP-dependent DNA helicase Rep (673 aa).

The region spanning 1-280 (MRLNPGQQQA…IKLEQNYRSS (280 aa)) is the UvrD-like helicase ATP-binding domain. ATP contacts are provided by residues 22–29 (AGAGSGKT) and Arg278. The region spanning 281 to 562 (GRILKAANIL…QLMTLHASKG (282 aa)) is the UvrD-like helicase C-terminal domain.

Belongs to the helicase family. UvrD subfamily. In terms of assembly, homodimer in association with DNA.

It carries out the reaction Couples ATP hydrolysis with the unwinding of duplex DNA by translocating in the 3'-5' direction.. The catalysed reaction is ATP + H2O = ADP + phosphate + H(+). With respect to regulation, binding to DNA induces dimerization, which is required for DNA helicase activity. Helicase activity is stimulated by PriC. In terms of biological role, rep helicase is a single-stranded (ss)DNA-dependent ATPase involved in DNA replication; it can initiate unwinding at a nick in the DNA. It binds to ssDNA and acts in a progressive fashion along the DNA in the 3' to 5' direction. Binds double-stranded (ds)DNA with a 5' ss- but not 3' ss-extension and forked structures with either lagging or leading ssDNA. Part of the PriC-Rep pathway for restart of stalled replication forks, which reloads the DnaB replicative helicase on sites other than the origin of replication. In Escherichia coli (strain K12), this protein is ATP-dependent DNA helicase Rep.